A 156-amino-acid chain; its full sequence is Homeobox-leucine zipper protein ATHB-52 (156 aa).

The homeobox DNA-binding region spans 8-67 (GKNKKKRLTQDQVRQLEKCFTMNKKLEPDLKLQLSNQLGLPQRQVAVWFQNKRARFKTQS). The segment at 68–96 (LEVQHCTLQSKHEAALSDKAKLEHQVQFL) is leucine-zipper.

Belongs to the HD-ZIP homeobox family. Class I subfamily. In terms of tissue distribution, expressed in roots and flowers.

The protein localises to the nucleus. In terms of biological role, probable transcription factor. In Arabidopsis thaliana (Mouse-ear cress), this protein is Homeobox-leucine zipper protein ATHB-52 (ATHB-52).